Consider the following 320-residue polypeptide: Probable protein adenylyltransferase aq_aa38 (320 aa).

The region spanning 76–206 is the Fido domain; that stretch reads VSEALILWIY…AIVVVEKLSR (131 aa). ATP-binding positions include 100–101, 157–159, and arginine 163; these read KS and GNG.

The protein belongs to the fic family.

It catalyses the reaction L-tyrosyl-[protein] + ATP = O-(5'-adenylyl)-L-tyrosyl-[protein] + diphosphate. The catalysed reaction is L-threonyl-[protein] + ATP = 3-O-(5'-adenylyl)-L-threonyl-[protein] + diphosphate. Its function is as follows. Probable adenylyltransferase that mediates the addition of adenosine 5'-monophosphate (AMP) to specific residues of target proteins. This Aquifex aeolicus (strain VF5) protein is Probable protein adenylyltransferase aq_aa38.